The sequence spans 249 residues: Putative type I specificity subunit S.MpnORF615P (249 aa).

This sequence belongs to the type-I restriction system S methylase family. In terms of assembly, the methyltransferase is composed of M and S polypeptides.

Its function is as follows. The specificity (S) subunit of a type I methyltransferase (MTase); this subunit dictates DNA sequence specificity. The single R subunit has multiple frameshifts and is probably not expressed. The chain is Putative type I specificity subunit S.MpnORF615P from Mycoplasma pneumoniae (strain ATCC 29342 / M129 / Subtype 1) (Mycoplasmoides pneumoniae).